A 1234-amino-acid chain; its full sequence is Formin-like protein 3 (1234 aa).

The Phosphatase tensin-type domain maps to 1–208 (MRLDSFPASI…QYVARRNISP (208 aa)). Residue C141 is the Phosphocysteine intermediate of the active site. The C2 tensin-type domain maps to 214 to 352 (ERALSFDCLI…FRAEMLFCEL (139 aa)). 2 disordered regions span residues 443–478 (DSDEEKYSVASDSVSSSEHEKVQPGGNSSDSENINH) and 492–840 (LVNT…LKPL). A compositionally biased stretch (pro residues) spans 498–507 (VLPPTTPPPC). Over residues 524–534 (VQHESPSDRKL) the composition is skewed to basic and acidic residues. Pro residues-rich tracts occupy residues 536–576 (SPSP…PPLP), 584–656 (QPPP…PPAP), 663–673 (PAPPPPPPPPR), 688–699 (GPPPPPPPPLPP), 709–721 (PSAPPPPPPPPPA), 729–739 (APAPPLPPPLP), and 762–784 (PAPPPPPPQAPKPPGTVPPPPPL). One can recognise an FH2 domain in the interval 827–1226 (QQSNPPKKAS…KLEKDKEKAT (400 aa)).

The protein belongs to the formin-like family. Class-II subfamily.

This chain is Formin-like protein 3 (FH3), found in Oryza sativa subsp. japonica (Rice).